The sequence spans 689 residues: Protein CFAP20DC (689 aa).

Disordered stretches follow at residues 241–263, 333–423, and 584–659; these read LKSTSRERTETPSGSSSGNNRIE, SKES…GPSE, and ISTS…DLSV. 2 stretches are compositionally biased toward polar residues: residues 251–260 and 343–359; these read TPSGSSSGNN and EESQSVPKDIFTFSSRP. Residues 394–405 show a composition bias toward acidic residues; it reads SEDDFYGGDSSE. Residues 409–421 are compositionally biased toward polar residues; that stretch reads HSIQGSRGPTTGP. Residues 584-593 are compositionally biased toward low complexity; sequence ISTSSDDTTT.

The polypeptide is Protein CFAP20DC (Homo sapiens (Human)).